The sequence spans 168 residues: Cell division inhibitor SulA (168 aa).

Positions 106–112 (ALLTGNY) are ftsZ binding. The lon protease binding stretch occupies residues 161-168 (KIHSSLYH).

This sequence belongs to the SulA family. As to quaternary structure, interacts with FtsZ. Is rapidly cleaved and degraded by the Lon protease once DNA damage is repaired.

Functionally, component of the SOS system and an inhibitor of cell division. Accumulation of SulA causes rapid cessation of cell division and the appearance of long, non-septate filaments. In the presence of GTP, binds a polymerization-competent form of FtsZ in a 1:1 ratio, thus inhibiting FtsZ polymerization and therefore preventing it from participating in the assembly of the Z ring. This mechanism prevents the premature segregation of damaged DNA to daughter cells during cell division. The polypeptide is Cell division inhibitor SulA (Serratia proteamaculans (strain 568)).